A 600-amino-acid polypeptide reads, in one-letter code: Elongation factor 4 (600 aa).

Residues 5-187 (SHIRNFSIVA…ALVNRLPCPE (183 aa)) enclose the tr-type G domain. Residues 17–22 (DHGKST) and 134–137 (NKID) each bind GTP.

This sequence belongs to the TRAFAC class translation factor GTPase superfamily. Classic translation factor GTPase family. LepA subfamily.

The protein localises to the cell inner membrane. It catalyses the reaction GTP + H2O = GDP + phosphate + H(+). Its function is as follows. Required for accurate and efficient protein synthesis under certain stress conditions. May act as a fidelity factor of the translation reaction, by catalyzing a one-codon backward translocation of tRNAs on improperly translocated ribosomes. Back-translocation proceeds from a post-translocation (POST) complex to a pre-translocation (PRE) complex, thus giving elongation factor G a second chance to translocate the tRNAs correctly. Binds to ribosomes in a GTP-dependent manner. The sequence is that of Elongation factor 4 from Paramagnetospirillum magneticum (strain ATCC 700264 / AMB-1) (Magnetospirillum magneticum).